Reading from the N-terminus, the 291-residue chain is Kidney mitochondrial carrier protein 1 (291 aa).

Position 2 is an N-acetylserine (serine 2). Solcar repeat units lie at residues lysine 7 to leucine 96, glutamate 104 to histidine 189, and aspartate 198 to leucine 289. Helical transmembrane passes span phenylalanine 9–isoleucine 26, glycine 71–threonine 89, leucine 106–alanine 124, glycine 164–tyrosine 183, phenylalanine 204–valine 224, and glycine 264–tyrosine 283.

This sequence belongs to the mitochondrial carrier (TC 2.A.29) family. In terms of assembly, interacts with VDAC1. As to expression, present in kidney (at protein level). Expressed predominantly within the kidney cortex in the proximal and distal tubules and at lower levels in the testis and white adipose tissue.

Its subcellular location is the mitochondrion inner membrane. It carries out the reaction sulfite(in) + sulfate(out) = sulfite(out) + sulfate(in). The enzyme catalyses thiosulfate(in) + sulfate(out) = thiosulfate(out) + sulfate(in). It catalyses the reaction sulfate(out) + phosphate(in) = sulfate(in) + phosphate(out). The catalysed reaction is oxalate(in) + sulfate(out) = oxalate(out) + sulfate(in). It carries out the reaction malonate(in) + sulfate(out) = malonate(out) + sulfate(in). The enzyme catalyses maleate(in) + sulfate(out) = maleate(out) + sulfate(in). It catalyses the reaction (S)-malate(in) + sulfate(out) = (S)-malate(out) + sulfate(in). The catalysed reaction is (3S)-citramalate(in) + sulfate(out) = (3S)-citramalate(out) + sulfate(in). It carries out the reaction (3R)-citramalate(in) + sulfate(out) = (3R)-citramalate(out) + sulfate(in). The enzyme catalyses sulfate(out) + succinate(in) = sulfate(in) + succinate(out). It catalyses the reaction (S,S)-tartrate(in) + sulfate(out) = (S,S)-tartrate(out) + sulfate(in). The catalysed reaction is (2R,3R)-tartrate(in) + sulfate(out) = (2R,3R)-tartrate(out) + sulfate(in). It carries out the reaction D-aspartate(in) + sulfate(out) = D-aspartate(out) + sulfate(in). The enzyme catalyses L-aspartate(in) + sulfate(out) = L-aspartate(out) + sulfate(in). It catalyses the reaction sulfate(in) = sulfate(out). The catalysed reaction is phosphate(in) = phosphate(out). It carries out the reaction (S)-malate(out) = (S)-malate(in). Functionally, antiporter that transports inorganic anions (sulfate, sulfite, thiosulfate and phosphate) and, to a lesser extent, a variety of dicarboxylates (e.g. malonate, malate and citramalate) and, even more so, aspartate. The sulfate/sulfate exchange is much higher than the phosphate/phosphate and malate/malate exchanges. The transport affinities is higher for sulfate and thiosulfate than for any other substrate. May catalyze the export of sulfite and thiosulfate (the hydrogen sulfide degradation products) from the mitochondria, thereby modulating the level of the hydrogen sulfide. Also may mediate a very low unidirectional transport of sulfate, phosphate and (S)-malate. This chain is Kidney mitochondrial carrier protein 1, found in Mus musculus (Mouse).